Here is a 342-residue protein sequence, read N- to C-terminus: SWR1-complex protein 5 (342 aa).

Disordered regions lie at residues 1–126 (MAPT…PVTI), 142–178 (PRTSTAKPDESADPANCDIAKSSSQQPETAKAKDPDS), and 214–238 (LGENAPADGETAAEDESSSAKRMPR). Composition is skewed to acidic residues over residues 8 to 20 (LAEDYASEEDSDF) and 33 to 43 (ISDDDDEEAGE). Residues 78–87 (GEKRQKKTKT) show a composition bias toward basic residues. A BCNT-C domain is found at 260-341 (NLSMASRLQA…RRARMAQAGK (82 aa)).

It belongs to the SWC5 family. In terms of assembly, component of the SWR1 chromatin remodeling complex.

The protein localises to the nucleus. Functionally, component of the SWR1 complex which mediates the ATP-dependent exchange of histone H2A for the H2A variant H2A.Z leading to transcriptional regulation of selected genes by chromatin remodeling. Involved in chromosome stability. This Neurospora crassa (strain ATCC 24698 / 74-OR23-1A / CBS 708.71 / DSM 1257 / FGSC 987) protein is SWR1-complex protein 5 (crc-2).